Here is an 81-residue protein sequence, read N- to C-terminus: Large ribosomal subunit protein bL31B (81 aa).

The protein belongs to the bacterial ribosomal protein bL31 family. Type B subfamily. Part of the 50S ribosomal subunit.

This is Large ribosomal subunit protein bL31B from Bacillus cereus (strain G9842).